The primary structure comprises 632 residues: Deoxynucleoside triphosphate triphosphohydrolase SAMHD1 (632 aa).

Residues 1–22 (MKGINGAKRVRHDASPSAQDGY) form a disordered region. Residues 44–107 (WDVEEVCLFL…LSCLRMLCQN (64 aa)) form the SAM domain. GTP contacts are provided by K113 and V114. N116 provides a ligand contact to dGTP. D134, Q139, and R142 together coordinate GTP. DGTP-binding residues include Q146, L147, V153, and R161. DATP is bound at residue Q146. A dCTP-binding site is contributed by Q146. Residue Q146 participates in dTTP binding. Residue R161 coordinates dATP. R161 serves as a coordination point for dCTP. R161 is a binding site for dTTP. The HD domain occupies 161-321 (RFEHSIGVGY…GIDVDKWDYF (161 aa)). 3 residues coordinate Mn(2+): H164, H203, and D204. Residues H207 and H212 each coordinate dATP. The dCTP site is built by H207 and H212. DTTP contacts are provided by H207 and H212. Residue H230 is part of the active site. Position 316 (D316) interacts with Mn(2+). DGTP-binding residues include K317, Y320, D324, R338, R357, K359, N363, R371, Y379, Q380, H381, and K382. K317, Y320, and D324 together coordinate dATP. DCTP-binding residues include K317, Y320, and D324. Positions 317, 320, and 324 each coordinate dTTP. R371 contributes to the dATP binding site. Residue R371 participates in dCTP binding. DATP is bound at residue Q380. Q380 is a binding site for dCTP. Q380 is a binding site for dTTP. 3 residues coordinate GTP: R456, K460, and K529. K529 contributes to the dGTP binding site.

Belongs to the SAMHD1 family. In terms of assembly, homodimer; in absence of GTP and dNTP. Homotetramer; in GTP- and dNTP-bound form. Interacts with rbbp8/CtIP. The cofactor is Zn(2+).

It localises to the nucleus. The protein resides in the chromosome. The enzyme catalyses a 2'-deoxyribonucleoside 5'-triphosphate + H2O = a 2'-deoxyribonucleoside + triphosphate + H(+). It catalyses the reaction dATP + H2O = 2'-deoxyadenosine + triphosphate + H(+). The catalysed reaction is dCTP + H2O = 2'-deoxycytidine + triphosphate + H(+). It carries out the reaction dGTP + H2O = 2'-deoxyguanosine + triphosphate + H(+). The enzyme catalyses dTTP + H2O = thymidine + triphosphate + H(+). With respect to regulation, allosterically activated and regulated via the combined actions of GTP and dNTPs (dATP, dGTP, dTTP and dCTP): Allosteric site 1 binds GTP, while allosteric site 2 binds dNTP. Allosteric activation promotes the formation of highly active homotetramers. Its function is as follows. Protein that acts both as a host restriction factor involved in defense response to virus and as a regulator of DNA end resection at stalled replication forks. Has deoxynucleoside triphosphate (dNTPase) activity, which is required to restrict infection by viruses: dNTPase activity reduces cellular dNTP levels to levels too low for retroviral reverse transcription to occur, blocking early-stage virus replication in dendritic and other myeloid cells. Functions during S phase at stalled DNA replication forks to promote the resection of gapped or reversed forks: acts by stimulating the exonuclease activity of mre11, activating the ATR-CHK1 pathway and allowing the forks to restart replication. Ability to promote DNA end resection at stalled replication forks is independent of dNTPase activity. The chain is Deoxynucleoside triphosphate triphosphohydrolase SAMHD1 from Xenopus laevis (African clawed frog).